The following is a 27-amino-acid chain: rRNA/tRNA 2'-O-methyltransferase fibrillarin (27 aa).

Residues 1–12 (XFEGRGGFGGRG) show a composition bias toward gly residues. Positions 1–27 (XFEGRGGFGGRGGGDRGGRGXGGFGGG) are disordered. Asymmetric dimethylarginine is present on residues arginine 5, arginine 11, arginine 16, and arginine 19.

The protein belongs to the methyltransferase superfamily. Fibrillarin family. As to quaternary structure, component of box C/D small nucleolar ribonucleoprotein (snoRNP) particles. It is associated with the U3, U8 and U13 small nuclear RNAs.

Its subcellular location is the nucleus. It is found in the nucleolus. It catalyses the reaction L-glutaminyl-[histone H2A] + S-adenosyl-L-methionine = N(5)-methyl-L-glutaminyl-[histone H2A] + S-adenosyl-L-homocysteine + H(+). In terms of biological role, S-adenosyl-L-methionine-dependent methyltransferase that has the ability to methylate both RNAs and proteins. Involved in pre-rRNA processing. Utilizes the methyl donor S-adenosyl-L-methionine to catalyze the site-specific 2'-hydroxyl methylation of ribose moieties in pre-ribosomal RNA. Site specificity is provided by a guide RNA that base pairs with the substrate. Methylation occurs at a characteristic distance from the sequence involved in base pairing with the guide RNA. Also acts as a protein methyltransferase by mediating methylation of 'Gln-105' of histone H2A (H2AQ105me), a modification that impairs binding of the FACT complex and is specifically present at 35S ribosomal DNA locus. The polypeptide is rRNA/tRNA 2'-O-methyltransferase fibrillarin (Physarum polycephalum (Slime mold)).